The chain runs to 155 residues: MAKKVVGGGVKPDLRFSDESVARLINAVMLDGKKDVAAKIVYGAMDIIAGKMKDEEPLEVFRRALSNVAPLVEVRSKRVGGATYQIPMEVKASRRDALAFRWIKLYATRRGGRSMSEKLAAELMDAASEQGASVKKRDEVHRMADANKAFAHFRF.

Belongs to the universal ribosomal protein uS7 family. In terms of assembly, part of the 30S ribosomal subunit. Contacts proteins S9 and S11.

Functionally, one of the primary rRNA binding proteins, it binds directly to 16S rRNA where it nucleates assembly of the head domain of the 30S subunit. Is located at the subunit interface close to the decoding center, probably blocks exit of the E-site tRNA. The sequence is that of Small ribosomal subunit protein uS7 from Chlorobium phaeobacteroides (strain BS1).